A 680-amino-acid chain; its full sequence is Putative cyclin-dependent serine/threonine-protein kinase DDB_G0272797/DDB_G0274007 (680 aa).

Positions 4-381 (YIILSKCGQG…SLEALEHPWF (378 aa)) constitute a Protein kinase domain. ATP contacts are provided by residues 10 to 18 (CGQGTYGSV) and Lys33. Asp125 functions as the Proton acceptor in the catalytic mechanism. 4 disordered regions span residues 243–299 (QQQQ…LQSP), 409–444 (RQLQ…QRQH), 483–507 (LAQH…QHQQ), and 597–680 (QQQQ…KSNG). Residues 257-286 (NNNNNNNNNNNNNNNNNNNNNNNNNNNNNN) are compositionally biased toward low complexity. A compositionally biased stretch (polar residues) spans 287–297 (KYNNISTSCLQ). Composition is skewed to low complexity over residues 410 to 444 (QLQQ…QRQH), 483 to 494 (LAQHQQYNSQQH), and 597 to 616 (QQQQ…PPQH). A compositionally biased stretch (basic residues) spans 617–631 (QHQHQHQHQHQHQHQ). Residues 632–642 (HQPQPQHQHQP) show a composition bias toward low complexity. Positions 643–655 (QPQPQPTPTPTPT) are enriched in pro residues. The segment covering 656-680 (STPTTTTIPPTITTTIQPTISKSNG) has biased composition (low complexity).

It belongs to the protein kinase superfamily. CMGC Ser/Thr protein kinase family. CDC2/CDKX subfamily.

The enzyme catalyses L-seryl-[protein] + ATP = O-phospho-L-seryl-[protein] + ADP + H(+). The catalysed reaction is L-threonyl-[protein] + ATP = O-phospho-L-threonyl-[protein] + ADP + H(+). The protein is Putative cyclin-dependent serine/threonine-protein kinase DDB_G0272797/DDB_G0274007 of Dictyostelium discoideum (Social amoeba).